Reading from the N-terminus, the 134-residue chain is Transcription antitermination protein NusB (134 aa).

It belongs to the NusB family.

Its function is as follows. Involved in transcription antitermination. Required for transcription of ribosomal RNA (rRNA) genes. Binds specifically to the boxA antiterminator sequence of the ribosomal RNA (rrn) operons. This chain is Transcription antitermination protein NusB, found in Shewanella oneidensis (strain ATCC 700550 / JCM 31522 / CIP 106686 / LMG 19005 / NCIMB 14063 / MR-1).